Here is a 382-residue protein sequence, read N- to C-terminus: L-arabinitol 4-dehydrogenase (382 aa).

Positions 55, 80, 81, 110, 113, 116, 124, and 165 each coordinate Zn(2+). NAD(+)-binding positions include 192–193 (PI), Asp213, Arg218, Ile293, and 317–319 (QYR).

This sequence belongs to the zinc-containing alcohol dehydrogenase family. As to quaternary structure, homotetramer. Zn(2+) serves as cofactor.

It catalyses the reaction L-arabinitol + NAD(+) = L-xylulose + NADH + H(+). It functions in the pathway carbohydrate degradation; L-arabinose degradation via L-arabinitol; D-xylulose 5-phosphate from L-arabinose (fungal route): step 2/5. Functionally, catalyzes the NAD-dependent oxidation of L-arabinitol to L-xylulose in the fungal L-arabinose catabolic pathway. L-arabinose catabolism is important for using plant material as a carbon source. Also active on ribitol and xylitol. Not active with NADP as cosubstrate. The polypeptide is L-arabinitol 4-dehydrogenase (ladA) (Aspergillus oryzae (Yellow koji mold)).